Consider the following 278-residue polypeptide: 4-deoxy-L-threo-5-hexosulose-uronate ketol-isomerase (278 aa).

4 residues coordinate Zn(2+): histidine 196, histidine 198, glutamate 203, and histidine 245.

It belongs to the KduI family. In terms of assembly, homohexamer. The cofactor is Zn(2+).

The enzyme catalyses 5-dehydro-4-deoxy-D-glucuronate = 3-deoxy-D-glycero-2,5-hexodiulosonate. It functions in the pathway glycan metabolism; pectin degradation; 2-dehydro-3-deoxy-D-gluconate from pectin: step 4/5. Functionally, catalyzes the isomerization of 5-dehydro-4-deoxy-D-glucuronate to 3-deoxy-D-glycero-2,5-hexodiulosonate. This is 4-deoxy-L-threo-5-hexosulose-uronate ketol-isomerase from Escherichia coli (strain K12 / MC4100 / BW2952).